Here is a 63-residue protein sequence, read N- to C-terminus: Anaphase-promoting complex subunit 13 (63 aa).

Residues 36–63 form a disordered region; that stretch reads KTDDTEETNQETQQADAETWRDLALDTQ. Basic and acidic residues predominate over residues 53–63; the sequence is ETWRDLALDTQ.

Belongs to the APC13 family. In terms of assembly, component of the anaphase promoting complex/cyclosome (APC/C) complex. Expressed constitutively in roots, leaves, stems, buds, flowers, and seeds.

Its subcellular location is the nucleus. It functions in the pathway protein modification; protein ubiquitination. Its function is as follows. Component of the anaphase promoting complex/cyclosome (APC/C), a cell cycle-regulated E3 ubiquitin ligase that controls progression through mitosis and the G1 phase of the cell cycle. The APC/C complex acts by mediating ubiquitination and subsequent degradation of target proteins. Regulates global growth and development, including phyllotaxis and apical dominance. Required for pollen maturation. Promotes (pri) miRNA transcription of each MIR159 genes. The protein is Anaphase-promoting complex subunit 13 of Arabidopsis thaliana (Mouse-ear cress).